The chain runs to 322 residues: L-asparaginase (322 aa).

The Asparaginase/glutaminase domain occupies 3-322 (KKVALITTGG…KEGIKDKFCY (320 aa)). Thr-13 (O-isoaspartyl threonine intermediate) is an active-site residue. Substrate-binding positions include Ser-56 and 89-90 (TD).

It belongs to the asparaginase 1 family. Homotetramer.

It localises to the cytoplasm. It catalyses the reaction L-asparagine + H2O = L-aspartate + NH4(+). This is L-asparaginase (ansA) from Bacillus licheniformis.